Here is a 150-residue protein sequence, read N- to C-terminus: 3-hydroxyacyl-[acyl-carrier-protein] dehydratase FabZ (150 aa).

His51 is an active-site residue.

The protein belongs to the thioester dehydratase family. FabZ subfamily.

Its subcellular location is the cytoplasm. The enzyme catalyses a (3R)-hydroxyacyl-[ACP] = a (2E)-enoyl-[ACP] + H2O. Its function is as follows. Involved in unsaturated fatty acids biosynthesis. Catalyzes the dehydration of short chain beta-hydroxyacyl-ACPs and long chain saturated and unsaturated beta-hydroxyacyl-ACPs. This is 3-hydroxyacyl-[acyl-carrier-protein] dehydratase FabZ from Legionella pneumophila (strain Lens).